A 232-amino-acid polypeptide reads, in one-letter code: Ubiquinone biosynthesis O-methyltransferase (232 aa).

R36, G55, D76, and L120 together coordinate S-adenosyl-L-methionine.

This sequence belongs to the methyltransferase superfamily. UbiG/COQ3 family.

The enzyme catalyses a 3-demethylubiquinol + S-adenosyl-L-methionine = a ubiquinol + S-adenosyl-L-homocysteine + H(+). It carries out the reaction a 3-(all-trans-polyprenyl)benzene-1,2-diol + S-adenosyl-L-methionine = a 2-methoxy-6-(all-trans-polyprenyl)phenol + S-adenosyl-L-homocysteine + H(+). It functions in the pathway cofactor biosynthesis; ubiquinone biosynthesis. In terms of biological role, O-methyltransferase that catalyzes the 2 O-methylation steps in the ubiquinone biosynthetic pathway. The polypeptide is Ubiquinone biosynthesis O-methyltransferase (Pseudomonas putida (strain ATCC 700007 / DSM 6899 / JCM 31910 / BCRC 17059 / LMG 24140 / F1)).